A 60-amino-acid polypeptide reads, in one-letter code: Large ribosomal subunit protein bL32 (60 aa).

It belongs to the bacterial ribosomal protein bL32 family.

This Pediococcus pentosaceus (strain ATCC 25745 / CCUG 21536 / LMG 10740 / 183-1w) protein is Large ribosomal subunit protein bL32.